A 344-amino-acid chain; its full sequence is Selenide, water dikinase (344 aa).

The active site involves Sec-16. Position 16 (Sec-16) is a non-standard amino acid, selenocysteine. ATP contacts are provided by residues Lys-19 and 46 to 48; that span reads TND. Mg(2+) is bound at residue Asp-49. ATP contacts are provided by residues Asp-66, Asp-89, and 135-137; that span reads GHT. Residue Asp-89 participates in Mg(2+) binding. Asp-223 provides a ligand contact to Mg(2+).

The protein belongs to the selenophosphate synthase 1 family. Class I subfamily. As to quaternary structure, homodimer. Mg(2+) serves as cofactor.

It catalyses the reaction hydrogenselenide + ATP + H2O = selenophosphate + AMP + phosphate + 2 H(+). Synthesizes selenophosphate from selenide and ATP. The chain is Selenide, water dikinase from Caldanaerobacter subterraneus subsp. tengcongensis (strain DSM 15242 / JCM 11007 / NBRC 100824 / MB4) (Thermoanaerobacter tengcongensis).